A 326-amino-acid polypeptide reads, in one-letter code: E3 ubiquitin-protein ligase SINAT3 (326 aa).

A disordered region spans residues 1–44 (MDLDSMDCTSTMDVTDDEEIHQDRHSYASVSKHHHTNNNTTNVN). The RING-type zinc finger occupies 63–99 (CPVCTNSMYPPIHQCHNGHTLCSTCKARVHNRCPTCR). Residues 113–306 (VAESLELPCK…KELKLRVTGR (194 aa)) form an SBD region. An SIAH-type zinc finger spans residues 116–176 (SLELPCKHMS…LVAHLRDDHK (61 aa)). Zn(2+)-binding residues include Cys-121, Cys-128, His-140, Cys-144, Cys-151, Cys-158, His-170, and His-175.

Belongs to the SINA (Seven in absentia) family. Interacts with SINAT6. Interacts with WAV3. Interacts with FREE1. Interacts with ELC/VPS23A.

The protein resides in the endosome. Its subcellular location is the multivesicular body. It is found in the cytoplasmic vesicle. It localises to the autophagosome. It catalyses the reaction S-ubiquitinyl-[E2 ubiquitin-conjugating enzyme]-L-cysteine + [acceptor protein]-L-lysine = [E2 ubiquitin-conjugating enzyme]-L-cysteine + N(6)-ubiquitinyl-[acceptor protein]-L-lysine.. It functions in the pathway protein modification; protein ubiquitination. In terms of biological role, E3 ubiquitin-protein ligase that mediates ubiquitination and subsequent proteasomal degradation of target proteins. E3 ubiquitin ligases accept ubiquitin from an E2 ubiquitin-conjugating enzyme in the form of a thioester and then directly transfers the ubiquitin to targeted substrates. It probably triggers the ubiquitin-mediated degradation of different substrates. Modulates directly the ubiquitination and proteasomal-dependent degradation of FREE1, a component of the ESCRT-I complex. Modulates directly the ubiquitination and proteasomal-dependent degradation of ELC/VPS23A, a component of the ESCRT-I complex. The chain is E3 ubiquitin-protein ligase SINAT3 from Arabidopsis thaliana (Mouse-ear cress).